The primary structure comprises 156 residues: Small ribosomal subunit protein uS7 (156 aa).

Belongs to the universal ribosomal protein uS7 family. Part of the 30S ribosomal subunit. Contacts proteins S9 and S11.

In terms of biological role, one of the primary rRNA binding proteins, it binds directly to 16S rRNA where it nucleates assembly of the head domain of the 30S subunit. Is located at the subunit interface close to the decoding center, probably blocks exit of the E-site tRNA. The protein is Small ribosomal subunit protein uS7 of Coprothermobacter proteolyticus (strain ATCC 35245 / DSM 5265 / OCM 4 / BT).